We begin with the raw amino-acid sequence, 100 residues long: Large ribosomal subunit protein uL23 (100 aa).

The protein belongs to the universal ribosomal protein uL23 family. Part of the 50S ribosomal subunit. Contacts protein L29, and trigger factor when it is bound to the ribosome.

Functionally, one of the early assembly proteins it binds 23S rRNA. One of the proteins that surrounds the polypeptide exit tunnel on the outside of the ribosome. Forms the main docking site for trigger factor binding to the ribosome. The polypeptide is Large ribosomal subunit protein uL23 (Vibrio campbellii (strain ATCC BAA-1116)).